Consider the following 593-residue polypeptide: Aspartate--tRNA(Asp/Asn) ligase (593 aa).

L-aspartate is bound at residue glutamate 173. The segment at 197-200 is aspartate; the sequence is QLFK. Arginine 219 contacts L-aspartate. Residues 219–221 and glutamine 228 each bind ATP; that span reads RDE. Histidine 451 contacts L-aspartate. Glutamate 485 contacts ATP. L-aspartate is bound at residue arginine 492. 537–540 serves as a coordination point for ATP; the sequence is GIDR.

Belongs to the class-II aminoacyl-tRNA synthetase family. Type 1 subfamily. As to quaternary structure, homodimer.

Its subcellular location is the cytoplasm. It catalyses the reaction tRNA(Asx) + L-aspartate + ATP = L-aspartyl-tRNA(Asx) + AMP + diphosphate. Its function is as follows. Aspartyl-tRNA synthetase with relaxed tRNA specificity since it is able to aspartylate not only its cognate tRNA(Asp) but also tRNA(Asn). Reaction proceeds in two steps: L-aspartate is first activated by ATP to form Asp-AMP and then transferred to the acceptor end of tRNA(Asp/Asn). The polypeptide is Aspartate--tRNA(Asp/Asn) ligase (Legionella pneumophila (strain Corby)).